The sequence spans 696 residues: Protein OS-9 homolog (696 aa).

The signal sequence occupies residues 1–15 (MLVVAFASLLGAARA). 3 N-linked (GlcNAc...) asparagine glycosylation sites follow: Asn35, Asn46, and Asn68. An MRH domain is found at 106 to 224 (NQCLVSQNGF…QVIVPDLCQL (119 aa)). Residues Cys108 and Cys121 are joined by a disulfide bond. Positions 116, 128, 178, 184, 206, and 212 each coordinate a mannooligosaccharide derivative. 2 disulfides stabilise this stretch: Cys177–Cys210 and Cys192–Cys222. N-linked (GlcNAc...) asparagine glycosylation is found at Asn276, Asn290, and Asn372. Disordered stretches follow at residues 450 to 600 (IEAS…DNSD) and 667 to 696 (TLGN…DDEL). The segment covering 458–467 (TKASESTPVS) has biased composition (polar residues). Residues 482-498 (RSRDKEEYFKENEKQGE) are compositionally biased toward basic and acidic residues. 3 stretches are compositionally biased toward polar residues: residues 499–518 (ENNA…GTIS), 528–553 (NQKQ…SAND), and 585–597 (NIDN…TLND). Asn588 carries an N-linked (GlcNAc...) asparagine glycan. Residues 685 to 696 (ESDRNGVIDDEL) are compositionally biased toward basic and acidic residues.

Belongs to the OS-9 family. In terms of assembly, interacts with missfolded ER lumenal proteins.

The protein resides in the endoplasmic reticulum membrane. Lectin involved in the quality control of the secretory pathway. As a member of the endoplasmic reticulum-associated degradation lumenal (ERAD-L) surveillance system, targets misfolded endoplasmic reticulum lumenal glycoproteins for degradation. The protein is Protein OS-9 homolog (YOS9) of Candida glabrata (strain ATCC 2001 / BCRC 20586 / JCM 3761 / NBRC 0622 / NRRL Y-65 / CBS 138) (Yeast).